Consider the following 62-residue polypeptide: Photosystem II reaction center protein Z (62 aa).

2 consecutive transmembrane segments (helical) span residues 8–28 (AVFALIATSSILLISVPVVFA) and 41–61 (FSGTSLWITLVFLVGILNSLI).

It belongs to the PsbZ family. In terms of assembly, PSII is composed of 1 copy each of membrane proteins PsbA, PsbB, PsbC, PsbD, PsbE, PsbF, PsbH, PsbI, PsbJ, PsbK, PsbL, PsbM, PsbT, PsbY, PsbZ, Psb30/Ycf12, at least 3 peripheral proteins of the oxygen-evolving complex and a large number of cofactors. It forms dimeric complexes.

Its subcellular location is the plastid. It is found in the chloroplast thylakoid membrane. Functionally, may control the interaction of photosystem II (PSII) cores with the light-harvesting antenna, regulates electron flow through the 2 photosystem reaction centers. PSII is a light-driven water plastoquinone oxidoreductase, using light energy to abstract electrons from H(2)O, generating a proton gradient subsequently used for ATP formation. This is Photosystem II reaction center protein Z from Morus indica (Mulberry).